Here is a 316-residue protein sequence, read N- to C-terminus: ATP synthase gamma chain (316 aa).

It belongs to the ATPase gamma chain family. In terms of assembly, F-type ATPases have 2 components, CF(1) - the catalytic core - and CF(0) - the membrane proton channel. CF(1) has five subunits: alpha(3), beta(3), gamma(1), delta(1), epsilon(1). CF(0) has three main subunits: a, b and c.

The protein resides in the cellular thylakoid membrane. In terms of biological role, produces ATP from ADP in the presence of a proton gradient across the membrane. The gamma chain is believed to be important in regulating ATPase activity and the flow of protons through the CF(0) complex. The polypeptide is ATP synthase gamma chain (Prochlorococcus marinus (strain MIT 9303)).